The chain runs to 252 residues: Bidirectional sugar transporter SWEET3b (252 aa).

At 1 to 8 (MVSNTIRV) the chain is on the extracellular side. The chain crosses the membrane as a helical span at residues 9–29 (AVGILGNAASMLLYAAPILTF). Residues 10–98 (VGILGNAASM…SIYTWFAPRE (89 aa)) form the MtN3/slv 1 domain. The Cytoplasmic segment spans residues 30 to 43 (RRVIKKGSVEEFSC). The helical transmembrane segment at 44–64 (VPYILALFNCLLYTWYGLPVV) threads the bilayer. Residues 65–75 (SSGWENSTVSS) are Extracellular-facing. The N-linked (GlcNAc...) asparagine glycan is linked to Asn70. The chain crosses the membrane as a helical span at residues 76–96 (INGLGILLEIAFISIYTWFAP). Topologically, residues 97–105 (RERKKFVLR) are cytoplasmic. Residues 106–126 (MVLPVLAFFALTAIFSSFLFH) traverse the membrane as a helical segment. Residues 127–132 (THGLRK) are Extracellular-facing. A helical membrane pass occupies residues 133 to 153 (VFVGSIGLVASISMYSSPMVA). Positions 134–219 (FVGSIGLVAS…LYCIYRKSHK (86 aa)) constitute a MtN3/slv 2 domain. Residues 154–167 (AKQVITTKSVEFMP) are Cytoplasmic-facing. The chain crosses the membrane as a helical span at residues 168–188 (FYLSLFSFLSSALWMIYGLLG). Over 189–190 (KD) the chain is Extracellular. A helical membrane pass occupies residues 191 to 211 (LFIASPNFIGCPMGILQLVLY). At 212 to 252 (CIYRKSHKEAEKLHDIDQENGLKVVTTHEKITGREPEAQRD) the chain is on the cytoplasmic side.

Belongs to the SWEET sugar transporter family. In terms of assembly, forms homooligomers and/or heterooligomers.

Its subcellular location is the cell membrane. Functionally, mediates both low-affinity uptake and efflux of sugar across the plasma membrane. In Oryza sativa subsp. japonica (Rice), this protein is Bidirectional sugar transporter SWEET3b (SWEET3B).